A 204-amino-acid chain; its full sequence is Large ribosomal subunit protein bL25 (204 aa).

S123 carries the phosphoserine modification.

Belongs to the bacterial ribosomal protein bL25 family. CTC subfamily. Part of the 50S ribosomal subunit; part of the 5S rRNA/L5/L18/L25 subcomplex. Contacts the 5S rRNA. Binds to the 5S rRNA independently of L5 and L18.

Its function is as follows. This is one of the proteins that binds to the 5S RNA in the ribosome where it forms part of the central protuberance. The chain is Large ribosomal subunit protein bL25 from Pseudomonas aeruginosa (strain UCBPP-PA14).